A 460-amino-acid chain; its full sequence is tRNA modification GTPase MnmE (460 aa).

Positions 29, 89, and 128 each coordinate (6S)-5-formyl-5,6,7,8-tetrahydrofolate. Positions 224 to 382 constitute a TrmE-type G domain; it reads GVPTVIIGKP…LKQNLLEIIQ (159 aa). Asn234 provides a ligand contact to K(+). GTP-binding positions include 234 to 239, 253 to 259, and 278 to 281; these read NAGKST, SEIAGTT, and DTAG. Ser238 contacts Mg(2+). K(+) contacts are provided by Ser253, Ile255, and Thr258. Thr259 provides a ligand contact to Mg(2+). Lys460 contacts (6S)-5-formyl-5,6,7,8-tetrahydrofolate.

The protein belongs to the TRAFAC class TrmE-Era-EngA-EngB-Septin-like GTPase superfamily. TrmE GTPase family. In terms of assembly, homodimer. Heterotetramer of two MnmE and two MnmG subunits. The cofactor is K(+).

The protein localises to the cytoplasm. Its function is as follows. Exhibits a very high intrinsic GTPase hydrolysis rate. Involved in the addition of a carboxymethylaminomethyl (cmnm) group at the wobble position (U34) of certain tRNAs, forming tRNA-cmnm(5)s(2)U34. This chain is tRNA modification GTPase MnmE, found in Cytophaga hutchinsonii (strain ATCC 33406 / DSM 1761 / CIP 103989 / NBRC 15051 / NCIMB 9469 / D465).